The following is a 72-amino-acid chain: Caerin-regulated peptide (72 aa).

A signal peptide spans 1-22 (MAFLKKSLLLVLFLGLVSLSIC). The propeptide occupies 23–43 (DEEKRENEDEEEQEDDEQSEE). The disordered stretch occupies residues 24-46 (EEKRENEDEEEQEDDEQSEEKRG). Residues 30–41 (EDEEEQEDDEQS) are compositionally biased toward acidic residues.

Expressed by the skin glands.

The protein resides in the secreted. Functionally, has antibacterial activity against Gram-positive bacterium M.luteus NCT C2665 and against Gram-negative bacterium E.coli K12D31. The sequence is that of Caerin-regulated peptide from Agalychnis callidryas (Red-eyed tree frog).